The chain runs to 1001 residues: Translation initiation factor IF-2 (1001 aa).

The disordered stretch occupies residues 56 to 418; it reads PDYVHDPNAV…VEAGPPPISR (363 aa). The span at 70-84 shows a compositional bias: basic and acidic residues; sequence TEAHEERHEHEEAHE. A compositionally biased stretch (low complexity) spans 85–108; that stretch reads PAAAPKAAVEPETPVAPAPEAAPA. The span at 109-120 shows a compositional bias: basic and acidic residues; it reads AKEERPAPEEPA. Composition is skewed to pro residues over residues 136 to 170, 180 to 194, 204 to 217, 229 to 252, 305 to 322, and 345 to 357; these read IHPP…PHAP, PARP…PSQT, RPAP…PTTT, QPFP…PPQQ, PAAP…PVPG, and GMPP…PRPQ. A compositionally biased stretch (basic and acidic residues) spans 379–410; it reads SRGRPGDRRPVRQQRERTEEEKILRPQRRHVE. The tr-type G domain maps to 499–668; that stretch reads RRAPVVTIMG…LLVADMQDLK (170 aa). The interval 508-515 is G1; that stretch reads GHVDHGKT. 508–515 provides a ligand contact to GTP; it reads GHVDHGKT. Residues 533–537 are G2; the sequence is GITQH. A G3 region spans residues 554 to 557; the sequence is DTPG. GTP contacts are provided by residues 554-558 and 608-611; these read DTPGH and NKID. The interval 608 to 611 is G4; it reads NKID. The segment at 644–646 is G5; that stretch reads SAR.

This sequence belongs to the TRAFAC class translation factor GTPase superfamily. Classic translation factor GTPase family. IF-2 subfamily.

It is found in the cytoplasm. Functionally, one of the essential components for the initiation of protein synthesis. Protects formylmethionyl-tRNA from spontaneous hydrolysis and promotes its binding to the 30S ribosomal subunits. Also involved in the hydrolysis of GTP during the formation of the 70S ribosomal complex. The chain is Translation initiation factor IF-2 from Solibacter usitatus (strain Ellin6076).